The following is a 142-amino-acid chain: Large ribosomal subunit protein uL22c (142 aa).

Belongs to the universal ribosomal protein uL22 family. As to quaternary structure, part of the 50S ribosomal subunit.

It is found in the plastid. The protein resides in the chloroplast. Its function is as follows. This protein binds specifically to 23S rRNA. Functionally, the globular domain of the protein is located near the polypeptide exit tunnel on the outside of the subunit, while an extended beta-hairpin is found that lines the wall of the exit tunnel in the center of the 70S ribosome. This is Large ribosomal subunit protein uL22c (rpl22) from Oenothera parviflora (Small-flowered evening primrose).